The following is a 118-amino-acid chain: Large ribosomal subunit protein uL24 (118 aa).

Belongs to the universal ribosomal protein uL24 family. In terms of assembly, part of the 50S ribosomal subunit.

Its function is as follows. One of two assembly initiator proteins, it binds directly to the 5'-end of the 23S rRNA, where it nucleates assembly of the 50S subunit. Functionally, one of the proteins that surrounds the polypeptide exit tunnel on the outside of the subunit. This is Large ribosomal subunit protein uL24 from Prochlorococcus marinus (strain MIT 9515).